The primary structure comprises 270 residues: ATP synthase subunit a (270 aa).

7 helical membrane-spanning segments follow: residues 29–49 (VDTFSISLVLGFLFAAVFAMV), 87–107 (IAPLALTIFCWVFLMNFMDLF), 108–128 (PVDLFPMAAQWIGYTFFGLEP), 140–160 (DVNATFAMSLSVLILIVGFSI), 182–202 (PVGAIILAPLNFAFQLVELAA), 220–240 (LIFILIALLPWGLQWVLGAPW), and 241–261 (AIFHILIITLQAFVFMMLTIV).

The protein belongs to the ATPase A chain family. F-type ATPases have 2 components, CF(1) - the catalytic core - and CF(0) - the membrane proton channel. CF(1) has five subunits: alpha(3), beta(3), gamma(1), delta(1), epsilon(1). CF(0) has three main subunits: a(1), b(2) and c(9-12). The alpha and beta chains form an alternating ring which encloses part of the gamma chain. CF(1) is attached to CF(0) by a central stalk formed by the gamma and epsilon chains, while a peripheral stalk is formed by the delta and b chains.

It localises to the cell inner membrane. In terms of biological role, key component of the proton channel; it plays a direct role in the translocation of protons across the membrane. This chain is ATP synthase subunit a, found in Chromobacterium violaceum (strain ATCC 12472 / DSM 30191 / JCM 1249 / CCUG 213 / NBRC 12614 / NCIMB 9131 / NCTC 9757 / MK).